The sequence spans 225 residues: uncharacterized protein (225 aa).

The helical transmembrane segment at threonine 2–leucine 22 threads the bilayer. Residue asparagine 73 is glycosylated (N-linked (GlcNAc...) asparagine; by host). The stretch at aspartate 114–leucine 146 forms a coiled coil. Asparagine 222 carries an N-linked (GlcNAc...) asparagine; by host glycan.

The protein resides in the membrane. This is an uncharacterized protein from Acanthamoeba polyphaga (Amoeba).